The chain runs to 323 residues: Chitin-binding lectin 1 (323 aa).

The signal sequence occupies residues 1 to 22 (MKETAISVLALLTLFLLEVVSA). A 4-hydroxyproline mark is found at P50, P51, P53, and P55. O-linked (Ara...) hydroxyproline glycans are attached at residues P50, P51, P53, and P55. 2 consecutive Chitin-binding type-1 domains span residues 58–101 (YPQC…QCPG) and 105–149 (EGRC…QCKL). Cystine bridges form between C61/C77, C70/C83, C76/C90, C95/C99, C108/C125, C117/C131, C124/C138, and C143/C147. S78, W80, W82, and Y89 together coordinate chitin. Residues 150 to 210 (PSPPPPPPPP…PPPPPPALPY (61 aa)) are extensin-like. A glycan (O-linked (Gal) serine) is linked at S151. 10 consecutive repeat copies span residues 151–159 (SPPPPPPPP), 160–164 (SPPPP), 165–167 (SPP), 168–172 (SPPPP), 173–180 (SPPPPPPP), 181–185 (SPPPP), 186–190 (SPPPP), 191–192 (SP), 193–198 (SPPPPP), and 200–206 (SPPPPPP). Residues 151-206 (SPPPPPPPPSPPPPSPPSPPPPSPPPPPPPSPPPPSPPPPSPSPPPPPASPPPPPP) are 10 X approximate repeats of S-P-P-P-P. 4-hydroxyproline occurs at positions 152, 153, 154, 155, 156, 157, 158, and 159. Residues P152, P153, P154, P155, P156, P157, P158, and P159 are each glycosylated (O-linked (Ara...) hydroxyproline). Positions 154–203 (PPPPPPSPPPPSPPSPPPPSPPPPPPPSPPPPSPPPPSPSPPPPPASPPP) are disordered. Residue S160 is glycosylated (O-linked (Gal) serine). A 4-hydroxyproline mark is found at P161, P162, P163, and P164. O-linked (Ara...) hydroxyproline glycosylation is found at P161, P162, P163, and P164. S165 is a glycosylation site (O-linked (Gal) serine). Residues P166 and P167 each carry the 4-hydroxyproline modification. O-linked (Ara...) hydroxyproline glycans are attached at residues P166 and P167. Residue S168 is glycosylated (O-linked (Gal) serine). P169, P170, P171, and P172 each carry 4-hydroxyproline. P169, P170, P171, and P172 each carry an O-linked (Ara...) hydroxyproline glycan. S173 is a glycosylation site (O-linked (Gal) serine). A 4-hydroxyproline mark is found at P174, P175, P176, P177, P178, P179, and P180. P174, P175, P176, P177, P178, P179, and P180 each carry an O-linked (Ara...) hydroxyproline glycan. S181 is a glycosylation site (O-linked (Gal) serine). 4-hydroxyproline occurs at positions 182, 183, 184, and 185. Residues P182, P183, P184, and P185 are each glycosylated (O-linked (Ara...) hydroxyproline). An O-linked (Gal) serine glycan is attached at S186. A 4-hydroxyproline mark is found at P187, P188, P189, and P190. Residues P187, P188, P189, and P190 are each glycosylated (O-linked (Ara...) hydroxyproline). An O-linked (Gal) serine glycan is attached at S191. P192 carries the 4-hydroxyproline modification. P192 carries O-linked (Ara...) hydroxyproline glycosylation. O-linked (Gal) serine glycosylation is present at S193. P194, P195, P196, P197, and P198 each carry 4-hydroxyproline. Residues P194, P195, P196, P197, and P198 are each glycosylated (O-linked (Ara...) hydroxyproline). O-linked (Gal) serine glycosylation occurs at S200. Residues P201, P202, P203, P204, P205, P206, and P209 each carry the 4-hydroxyproline modification. O-linked (Ara...) hydroxyproline glycosylation is found at P201, P202, P203, P204, P205, P206, and P209. 2 consecutive Chitin-binding type-1 domains span residues 210–253 (YPQC…QCPG) and 257–301 (EGRC…QCNT). 8 disulfide bridges follow: C213-C229, C222-C235, C228-C242, C247-C251, C260-C277, C269-C283, C276-C290, and C295-C299. Residues S230, W232, W234, and Y241 each contribute to the chitin site.

The protein in the central section; belongs to the extensin family. As to quaternary structure, homodimer. In terms of processing, heavily glycosylated with beta-arabinose on hydroxyprolines and with alpha-galactose on serines of the extensin-like domain. As no other sugars could be detected in the native lectin, it is unlikely that the three putative N-glycosylation sites are actually glycosylated. The N-terminus is blocked. The N-terminal sequences proposed in PubMed:9022287 and PubMed:11056399 originate probably from truncated proteins.

This protein might function as a defense against chitin containing pathogens. Binds to several branched or linear N-acetyllactosamine-containing glycosphingolipids and also to lactosylceramide with sphingosine and non-hydroxy fatty acids. The sequence is that of Chitin-binding lectin 1 from Solanum tuberosum (Potato).